Reading from the N-terminus, the 376-residue chain is tRNA-specific 2-thiouridylase MnmA (376 aa).

ATP is bound by residues 14–21 (GMSGGVDS) and methionine 40. An interaction with target base in tRNA region spans residues 100 to 102 (NPD). Catalysis depends on cysteine 105, which acts as the Nucleophile. Cysteine 105 and cysteine 202 are oxidised to a cystine. ATP is bound at residue glycine 129. Residues 152-154 (KDQ) form an interaction with tRNA region. Cysteine 202 functions as the Cysteine persulfide intermediate in the catalytic mechanism. The segment at 315 to 316 (RY) is interaction with tRNA.

It belongs to the MnmA/TRMU family.

The protein resides in the cytoplasm. It catalyses the reaction S-sulfanyl-L-cysteinyl-[protein] + uridine(34) in tRNA + AH2 + ATP = 2-thiouridine(34) in tRNA + L-cysteinyl-[protein] + A + AMP + diphosphate + H(+). Catalyzes the 2-thiolation of uridine at the wobble position (U34) of tRNA, leading to the formation of s(2)U34. This Lactococcus lactis subsp. cremoris (strain MG1363) protein is tRNA-specific 2-thiouridylase MnmA.